The following is a 562-amino-acid chain: Endochitinase (562 aa).

Residues 1 to 20 (MSLLYIILLFTQFLLLPTDA) form the signal peptide. The region spanning 27–311 (TNIAVYWGQN…EILKNLLTSA (285 aa)) is the GH18 domain. Glutamate 157 serves as the catalytic Proton donor. 2 disordered regions span residues 329–358 (TSSA…SKVT) and 461–484 (TLSP…SDST). The interval 481 to 562 (SDSTARTLAK…NFSYLESNYF (82 aa)) is chitin-binding, high affinity. An N-linked (GlcNAc...) asparagine glycan is attached at asparagine 553.

This sequence belongs to the glycosyl hydrolase 18 family. Chitinase class V subfamily. Post-translationally, extensively glycosylated with a series of short O-linked mannose oligosaccharides ranging in size from Man(2) to Man(5).

It is found in the secreted. The protein resides in the cell wall. It catalyses the reaction Random endo-hydrolysis of N-acetyl-beta-D-glucosaminide (1-&gt;4)-beta-linkages in chitin and chitodextrins.. Functionally, chitinase is required for cell separation during growth of S.cerevisiae. The chain is Endochitinase (CTS1) from Saccharomyces cerevisiae (strain ATCC 204508 / S288c) (Baker's yeast).